A 450-amino-acid chain; its full sequence is Eukaryotic translation initiation factor 3 subunit E (450 aa).

Residues 255 to 424 form the PCI domain; that stretch reads TELFFSPAYI…GTVIMNHPPQ (170 aa).

This sequence belongs to the eIF-3 subunit E family. Component of the eukaryotic translation initiation factor 3 (eIF-3) complex.

The protein resides in the cytoplasm. Functionally, component of the eukaryotic translation initiation factor 3 (eIF-3) complex, which is involved in protein synthesis of a specialized repertoire of mRNAs and, together with other initiation factors, stimulates binding of mRNA and methionyl-tRNAi to the 40S ribosome. The eIF-3 complex specifically targets and initiates translation of a subset of mRNAs involved in cell proliferation. The sequence is that of Eukaryotic translation initiation factor 3 subunit E (int6) from Aspergillus clavatus (strain ATCC 1007 / CBS 513.65 / DSM 816 / NCTC 3887 / NRRL 1 / QM 1276 / 107).